The primary structure comprises 459 residues: Putrescine aminotransferase (459 aa).

Residues 150–151 and Q274 each bind pyridoxal 5'-phosphate; that span reads GT. Position 300 is an N6-(pyridoxal phosphate)lysine (K300). Residue T332 coordinates pyridoxal 5'-phosphate.

This sequence belongs to the class-III pyridoxal-phosphate-dependent aminotransferase family. Putrescine aminotransferase subfamily. Pyridoxal 5'-phosphate serves as cofactor.

It carries out the reaction an alkane-alpha,omega-diamine + 2-oxoglutarate = an omega-aminoaldehyde + L-glutamate. The catalysed reaction is putrescine + 2-oxoglutarate = 1-pyrroline + L-glutamate + H2O. The enzyme catalyses cadaverine + 2-oxoglutarate = 5-aminopentanal + L-glutamate. The protein operates within amine and polyamine degradation; putrescine degradation; 4-aminobutanal from putrescine (transaminase route): step 1/1. Catalyzes the aminotransferase reaction from putrescine to 2-oxoglutarate, leading to glutamate and 4-aminobutanal, which spontaneously cyclizes to form 1-pyrroline. This is the first step in one of two pathways for putrescine degradation, where putrescine is converted into 4-aminobutanoate (gamma-aminobutyrate or GABA) via 4-aminobutanal. Also functions as a cadaverine transaminase in a a L-lysine degradation pathway to succinate that proceeds via cadaverine, glutarate and L-2-hydroxyglutarate. This is Putrescine aminotransferase from Escherichia coli (strain K12 / MC4100 / BW2952).